The primary structure comprises 203 residues: Large ribosomal subunit protein uL13 (203 aa).

A2 carries the N-acetylalanine modification. Residue R59 is modified to Citrulline. A Phosphoserine modification is found at S77. R140 bears the Citrulline mark. Position 191 is an N6-acetyllysine (K191).

Belongs to the universal ribosomal protein uL13 family. As to quaternary structure, component of the 60S ribosome. Component of the GAIT complex. Interacts with EIF4G1. In terms of processing, phosphorylation at Ser-77 upon interferon-gamma treatment in macrophages involves a DAPK1-DAPK3 kinase cascade and is causing release from the ribosome, association with the GAIT complex and subsequent involvement in transcript-selective translation inhibition. Citrullinated by PADI4.

The protein localises to the cytoplasm. Associated with ribosomes but is not required for canonical ribosome function and has extra-ribosomal functions. Component of the GAIT (gamma interferon-activated inhibitor of translation) complex which mediates interferon-gamma-induced transcript-selective translation inhibition in inflammation processes. Upon interferon-gamma activation and subsequent phosphorylation dissociates from the ribosome and assembles into the GAIT complex which binds to stem loop-containing GAIT elements in the 3'-UTR of diverse inflammatory mRNAs (such as ceruplasmin) and suppresses their translation. In the GAIT complex interacts with m7G cap-bound eIF4G at or near the eIF3-binding site and blocks the recruitment of the 43S ribosomal complex. Involved in methylation of rRNA. This chain is Large ribosomal subunit protein uL13 (Rpl13a), found in Rattus norvegicus (Rat).